Reading from the N-terminus, the 388-residue chain is Chorismate synthase (388 aa).

NADP(+) is bound by residues Arg-39 and Arg-45. FMN-binding positions include 130–132 (RSS), 251–252 (NA), Gly-296, 311–315 (KPIPT), and Arg-337.

The protein belongs to the chorismate synthase family. Homotetramer. Requires FMNH2 as cofactor.

It catalyses the reaction 5-O-(1-carboxyvinyl)-3-phosphoshikimate = chorismate + phosphate. The protein operates within metabolic intermediate biosynthesis; chorismate biosynthesis; chorismate from D-erythrose 4-phosphate and phosphoenolpyruvate: step 7/7. Functionally, catalyzes the anti-1,4-elimination of the C-3 phosphate and the C-6 proR hydrogen from 5-enolpyruvylshikimate-3-phosphate (EPSP) to yield chorismate, which is the branch point compound that serves as the starting substrate for the three terminal pathways of aromatic amino acid biosynthesis. This reaction introduces a second double bond into the aromatic ring system. The sequence is that of Chorismate synthase from Streptococcus uberis (strain ATCC BAA-854 / 0140J).